The following is a 341-amino-acid chain: Beta-hexosaminidase (341 aa).

Residues D61, R69, R134, and 164–165 (KH) contribute to the substrate site. Catalysis depends on H177, which acts as the Proton donor/acceptor. Residue D249 is the Nucleophile of the active site.

The protein belongs to the glycosyl hydrolase 3 family. NagZ subfamily.

It localises to the cytoplasm. It carries out the reaction Hydrolysis of terminal non-reducing N-acetyl-D-hexosamine residues in N-acetyl-beta-D-hexosaminides.. Its pathway is cell wall biogenesis; peptidoglycan recycling. Its function is as follows. Plays a role in peptidoglycan recycling by cleaving the terminal beta-1,4-linked N-acetylglucosamine (GlcNAc) from peptide-linked peptidoglycan fragments, giving rise to free GlcNAc, anhydro-N-acetylmuramic acid and anhydro-N-acetylmuramic acid-linked peptides. The protein is Beta-hexosaminidase of Shewanella frigidimarina (strain NCIMB 400).